Reading from the N-terminus, the 102-residue chain is Small integral membrane protein 29 (102 aa).

Asparagine 3 carries an N-linked (GlcNAc...) asparagine glycan. Residues 21-41 (VLGPFFLITLVGVVVAVVMYV) form a helical membrane-spanning segment.

The protein localises to the membrane. The sequence is that of Small integral membrane protein 29 from Mus musculus (Mouse).